A 110-amino-acid chain; its full sequence is Phosphoribosyl-AMP cyclohydrolase (110 aa).

Asp-74 provides a ligand contact to Mg(2+). Zn(2+) is bound at residue Cys-75. 2 residues coordinate Mg(2+): Asp-76 and Asp-78. Residues Cys-91 and Cys-98 each coordinate Zn(2+).

It belongs to the PRA-CH family. As to quaternary structure, homodimer. Mg(2+) is required as a cofactor. Zn(2+) serves as cofactor.

Its subcellular location is the cytoplasm. The catalysed reaction is 1-(5-phospho-beta-D-ribosyl)-5'-AMP + H2O = 1-(5-phospho-beta-D-ribosyl)-5-[(5-phospho-beta-D-ribosylamino)methylideneamino]imidazole-4-carboxamide. It participates in amino-acid biosynthesis; L-histidine biosynthesis; L-histidine from 5-phospho-alpha-D-ribose 1-diphosphate: step 3/9. Functionally, catalyzes the hydrolysis of the adenine ring of phosphoribosyl-AMP. The sequence is that of Phosphoribosyl-AMP cyclohydrolase from Lacticaseibacillus casei (strain BL23) (Lactobacillus casei).